The sequence spans 285 residues: Bifunctional protein FolD (285 aa).

NADP(+) contacts are provided by residues G163 to S165, S188, and A231.

Belongs to the tetrahydrofolate dehydrogenase/cyclohydrolase family. Homodimer.

The enzyme catalyses (6R)-5,10-methylene-5,6,7,8-tetrahydrofolate + NADP(+) = (6R)-5,10-methenyltetrahydrofolate + NADPH. It catalyses the reaction (6R)-5,10-methenyltetrahydrofolate + H2O = (6R)-10-formyltetrahydrofolate + H(+). The protein operates within one-carbon metabolism; tetrahydrofolate interconversion. Its function is as follows. Catalyzes the oxidation of 5,10-methylenetetrahydrofolate to 5,10-methenyltetrahydrofolate and then the hydrolysis of 5,10-methenyltetrahydrofolate to 10-formyltetrahydrofolate. The polypeptide is Bifunctional protein FolD (Oenococcus oeni (strain ATCC BAA-331 / PSU-1)).